Reading from the N-terminus, the 505-residue chain is Acetyl-coenzyme A carboxylase carboxyl transferase subunit beta, chloroplastic (505 aa).

A compositionally biased stretch (low complexity) spans 189–205; sequence ESVSNSKSGSSSIRTGG. Residues 189–213 are disordered; sequence ESVSNSKSGSSSIRTGGNSSDFNRR. In terms of domain architecture, CoA carboxyltransferase N-terminal spans 228–499; sequence LWVQCENCYG…NQNSSRALGS (272 aa). Residues C232, C235, C251, and C254 each coordinate Zn(2+). Residues 232–254 form a C4-type zinc finger; it reads CENCYGLNYKKFVSFKMHICEQC.

This sequence belongs to the AccD/PCCB family. As to quaternary structure, acetyl-CoA carboxylase is a heterohexamer composed of biotin carboxyl carrier protein, biotin carboxylase and 2 subunits each of ACCase subunit alpha and ACCase plastid-coded subunit beta (accD). Zn(2+) serves as cofactor.

The protein localises to the plastid. The protein resides in the chloroplast stroma. The catalysed reaction is N(6)-carboxybiotinyl-L-lysyl-[protein] + acetyl-CoA = N(6)-biotinyl-L-lysyl-[protein] + malonyl-CoA. Its pathway is lipid metabolism; malonyl-CoA biosynthesis; malonyl-CoA from acetyl-CoA: step 1/1. Component of the acetyl coenzyme A carboxylase (ACC) complex. Biotin carboxylase (BC) catalyzes the carboxylation of biotin on its carrier protein (BCCP) and then the CO(2) group is transferred by the transcarboxylase to acetyl-CoA to form malonyl-CoA. This is Acetyl-coenzyme A carboxylase carboxyl transferase subunit beta, chloroplastic from Calycanthus floridus var. glaucus (Eastern sweetshrub).